A 188-amino-acid chain; its full sequence is Elongation factor P-like protein (188 aa).

It belongs to the elongation factor P family.

The sequence is that of Elongation factor P-like protein from Marinobacter nauticus (strain ATCC 700491 / DSM 11845 / VT8) (Marinobacter aquaeolei).